Here is a 732-residue protein sequence, read N- to C-terminus: Coagulation factor XIII A chain (732 aa).

The tract at residues 1–26 (MSDTPASTFGGRRAVPPNNSNAAEVD) is disordered. Position 2 is an N-acetylserine (Ser2). Positions 2-38 (SDTPASTFGGRRAVPPNNSNAAEVDLPTEELQGLVPR) are cleaved as a propeptide — activation peptide. Active-site residues include Cys315, His374, and Asp397. Asn437, Asp439, Glu486, and Glu491 together coordinate Ca(2+). An N-linked (GlcNAc...) asparagine glycan is attached at Asn614.

The protein belongs to the transglutaminase superfamily. Transglutaminase family. As to quaternary structure, tetramer of two A chains (F13A1) and two B (F13B) chains. The cofactor is Ca(2+). Post-translationally, the activation peptide is released by thrombin.

The protein resides in the cytoplasm. The protein localises to the secreted. It catalyses the reaction L-glutaminyl-[protein] + L-lysyl-[protein] = [protein]-L-lysyl-N(6)-5-L-glutamyl-[protein] + NH4(+). Its function is as follows. Factor XIII is activated by thrombin and calcium ion to a transglutaminase that catalyzes the formation of gamma-glutamyl-epsilon-lysine cross-links between fibrin chains, thus stabilizing the fibrin clot. Also cross-link alpha-2-plasmin inhibitor, or fibronectin, to the alpha chains of fibrin. The polypeptide is Coagulation factor XIII A chain (F13a1) (Mus musculus (Mouse)).